The sequence spans 75 residues: Small ribosomal subunit protein bS18 (75 aa).

The protein belongs to the bacterial ribosomal protein bS18 family. Part of the 30S ribosomal subunit. Forms a tight heterodimer with protein bS6.

Binds as a heterodimer with protein bS6 to the central domain of the 16S rRNA, where it helps stabilize the platform of the 30S subunit. The polypeptide is Small ribosomal subunit protein bS18 (Pseudoalteromonas atlantica (strain T6c / ATCC BAA-1087)).